The primary structure comprises 178 residues: MVTRRLSTNVHIDLQPIRQGILLPFHDRPAEMRDLAKCNDQFFRNVRDTISEPKFTQLMELWLEKSRAEVPDADFLMTTRNIMLSFPSNEEQGHQRSASHGSTSSATSTPKRLSISSMDPARIHLWRQFCNVVGYDMPTPGEQKEAPPSPAQEAIPESPVEEAIASDSDEEEEEEIKA.

2 disordered regions span residues 89 to 115 (NEEQ…RLSI) and 136 to 178 (DMPT…EIKA). Residues 98 to 109 (ASHGSTSSATST) show a composition bias toward low complexity. Acidic residues predominate over residues 167–178 (DSDEEEEEEIKA).

Its subcellular location is the cytoplasm. It localises to the nucleus. This is an uncharacterized protein from Schizosaccharomyces pombe (strain 972 / ATCC 24843) (Fission yeast).